A 186-amino-acid chain; its full sequence is uncharacterized protein (186 aa).

Residues 121-146 (TSPLLKKNKPSSDQDDTSKQSFDQDE) form a disordered region.

This sequence belongs to the chlamydial CPn_0422/CT_273/TC_0545 family.

This is an uncharacterized protein from Chlamydia muridarum (strain MoPn / Nigg).